We begin with the raw amino-acid sequence, 348 residues long: Oxygen-dependent coproporphyrinogen-III oxidase (348 aa).

S104 contacts substrate. 2 residues coordinate a divalent metal cation: H108 and H118. The active-site Proton donor is the H118. 120–122 provides a ligand contact to substrate; the sequence is NYR. Residues H152 and H182 each contribute to the a divalent metal cation site. The segment at 272–307 is important for dimerization; it reads YAEFNLVWDRGTIFGLQTNGRTESILMSLPPLARWE.

This sequence belongs to the aerobic coproporphyrinogen-III oxidase family. In terms of assembly, homodimer. It depends on a divalent metal cation as a cofactor.

It localises to the cytoplasm. The catalysed reaction is coproporphyrinogen III + O2 + 2 H(+) = protoporphyrinogen IX + 2 CO2 + 2 H2O. It functions in the pathway porphyrin-containing compound metabolism; protoporphyrin-IX biosynthesis; protoporphyrinogen-IX from coproporphyrinogen-III (O2 route): step 1/1. Its function is as follows. Involved in the heme and chlorophyll biosynthesis. Catalyzes the aerobic oxidative decarboxylation of propionate groups of rings A and B of coproporphyrinogen-III to yield the vinyl groups in protoporphyrinogen-IX. In Prochlorococcus marinus (strain NATL1A), this protein is Oxygen-dependent coproporphyrinogen-III oxidase.